Reading from the N-terminus, the 317-residue chain is Taste receptor type 2 member 14 (317 aa).

Residues 1 to 7 are Extracellular-facing; sequence MGDVIKS. The helical transmembrane segment at 8–28 threads the bilayer; it reads IFTFVLIVEFIIGNLGNSFIA. Over 29–55 the chain is Cytoplasmic; that stretch reads LVNCIDWVKGRKISSVDQILTALAISR. Residues 56–76 form a helical membrane-spanning segment; it reads ISLVWLIFGSWCVSVFLPALF. Topologically, residues 77 to 87 are extracellular; that stretch reads ATEKMFRMLTN. Thr-86 and Trp-89 together coordinate cholesterol. A helical transmembrane segment spans residues 88–108; that stretch reads IWTVINHFSVWLATGLGTFYF. Residues 109 to 129 are Cytoplasmic-facing; sequence LKIANFSNSIFLYLKWRVKKV. Residues 130–150 traverse the membrane as a helical segment; sequence VLVLLLVTSVFLFLNIALINI. Topologically, residues 151–184 are extracellular; that stretch reads HINASINGYRRNKTCSSDSSNFTRFSSLIVLTST. N-linked (GlcNAc...) asparagine glycans are attached at residues Asn-153, Asn-162, and Asn-171. Val-180 lines the cholesterol pocket. Residues 185–205 form a helical membrane-spanning segment; sequence VFIFIPFTLSLAMFLLLIFSL. Topologically, residues 206–232 are cytoplasmic; the sequence is WKHRKKMQHXVKRSGDASTKAHRGVKS. A helical transmembrane segment spans residues 233-253; the sequence is VITFFLLYAIFCLSFFISVWT. Residues 254 to 261 lie on the Extracellular side of the membrane; sequence SERLEENL. A helical transmembrane segment spans residues 262-282; that stretch reads IILSQVMGMAYPSCHSCVLIL. Positions 265 and 268 each coordinate cholesterol. Over 283–317 the chain is Cytoplasmic; sequence GNKKLRQASLSVLLWLRYMFKDGEPSGHKEFRESS.

It belongs to the G-protein coupled receptor T2R family. Core component of the TAS2R14-GNAI1 complex, consisting of TAS2R14, GNAI1, GNB1 and GNG2; within the complex interacts with GNAI1. Core component of the TAS2R14-GNAT3 complex, consisting of TAS2R14, GNAT3, GNB1 and GNG2; within the complex interacts with GNAT3. Core component of the TAS2R14-GNAS2 complex, consisting of TAS2R14, GNAS2, GNB1 and GNG2; within the complex interacts with GNAS2.

It is found in the membrane. It carries out the reaction Ca(2+)(in) = Ca(2+)(out). The enzyme catalyses 3',5'-cyclic AMP(in) = 3',5'-cyclic AMP(out). Basal activity is enhanced by binding to bitter tastants, such as flufenamic acid and aristolochic acid. Regulated by cholesterol in a concentration-dependent manner. Functionally, gustducin-linked G-protein coupled receptor that plays a role in the perception of bitterness. The activity of this receptor stimulates GNAT3, activating the gustducin G-protein pathway. Likely plays a role in sensing the chemical composition of the gastrointestinal content and other extra-oral tissues via the inhibitory G-protein pathways. This is Taste receptor type 2 member 14 (TAS2R14) from Gorilla gorilla gorilla (Western lowland gorilla).